Here is a 179-residue protein sequence, read N- to C-terminus: UPF0227 protein Sbal_2415 (179 aa).

The protein belongs to the UPF0227 family.

This Shewanella baltica (strain OS155 / ATCC BAA-1091) protein is UPF0227 protein Sbal_2415.